The sequence spans 236 residues: Terpene cyclase andB (236 aa).

7 helical membrane passes run 13–33, 45–65, 70–90, 106–126, 135–155, 166–186, and 200–220; these read TVVNLLGSASGIGWILNYILM, MSMLPLCCNIAWEFVYGILCP, VVRPVILSWLVLNCLVVYAAI, HLPLLFTVGIAACTGFHIALI, FLWSARSCQVLLSIGGLFQLL, VLWLSRFLGSICGVLKMTLMW, and LTAYCIALWIISDVLYGVVFY.

It belongs to the paxB family.

The protein resides in the membrane. It functions in the pathway secondary metabolite biosynthesis; terpenoid biosynthesis. Functionally, terpene cyclase; part of the gene cluster that mediates the biosynthesis of anditomin, a fungal meroterpenoid. The first step of the pathway is the synthesis of 3,5-dimethylorsellinic acid (DMOA) by the polyketide synthase andM. DMOA is then converted to the phthalide compound 5,7-dihydroxy-4,6-dimethylphthalide (DHDMP) by the cytochrome P450 monooxygenase andK, which is further prenylated by the prenyltransferase andD to yield farnesyl-DHDMP. Further epoxidation by the FAD-dependent monooxygenase andE leads to epoxyfarnesyl-DHDMP. The next step involves the terpene cyclase andB that converts epoxyfarnesyl-DHDMP into preandiloid A through opening of the epoxide ring followed by the cyclization of the farnesyl moiety. Preandiloid A is in turn oxidized at the C-3 hydroxyl group to yield preandiloid B by the dehydrogenase andC. The dioxygenase andA is solely responsible for the dehydrogenation of preandiloid B leading to the enone preandiloid C, as well as for the intriguing structural rearrangement to generate the bicyclo[2.2.2]octane core, transforming preandiloid C into andiconin. FAD-binding monooxygenase andJ then produces andilesin D which is reduced by dehydrogenase andI to yield andilesin A. Action of acetyltransferase andG followed by a spontaneous acetate elimination leads then to andilesin B, which is in turn substrate of the short chain dehydrogenase andH to yield andilesin C. Finally, the dioxygenase andF catalyzes the transformation of andilesin C to anditomin. This Emericella variicolor (Aspergillus stellatus) protein is Terpene cyclase andB.